The chain runs to 292 residues: Coatomer subunit epsilon (292 aa).

It belongs to the COPE family. In terms of assembly, oligomeric complex that consists of at least the alpha, beta, beta', gamma, delta, epsilon and zeta subunits.

The protein resides in the cytoplasm. It localises to the golgi apparatus membrane. It is found in the cytoplasmic vesicle. Its subcellular location is the COPI-coated vesicle membrane. The coatomer is a cytosolic protein complex that binds to dilysine motifs and reversibly associates with Golgi non-clathrin-coated vesicles, which further mediate biosynthetic protein transport from the ER, via the Golgi up to the trans Golgi network. The coatomer complex is required for budding from Golgi membranes, and is essential for the retrograde Golgi-to-ER transport of dilysine-tagged proteins. This Caenorhabditis elegans protein is Coatomer subunit epsilon (cope-1).